The chain runs to 346 residues: Methylthioribose-1-phosphate isomerase (346 aa).

Substrate is bound by residues 48 to 50 (RGA), arginine 88, and glutamine 192. Aspartate 233 (proton donor) is an active-site residue. 243–244 (NK) is a substrate binding site.

The protein belongs to the eIF-2B alpha/beta/delta subunits family. MtnA subfamily.

It catalyses the reaction 5-(methylsulfanyl)-alpha-D-ribose 1-phosphate = 5-(methylsulfanyl)-D-ribulose 1-phosphate. Its pathway is amino-acid biosynthesis; L-methionine biosynthesis via salvage pathway; L-methionine from S-methyl-5-thio-alpha-D-ribose 1-phosphate: step 1/6. Catalyzes the interconversion of methylthioribose-1-phosphate (MTR-1-P) into methylthioribulose-1-phosphate (MTRu-1-P). The chain is Methylthioribose-1-phosphate isomerase from Alcanivorax borkumensis (strain ATCC 700651 / DSM 11573 / NCIMB 13689 / SK2).